A 143-amino-acid chain; its full sequence is Large ribosomal subunit protein uL15 (143 aa).

Positions 1–52 (MKLNTLAPAAGSKSAPKRLGRGIGSGLGKTSGKGHKGQKARSGGYHKVGFEG) are disordered. Residues 21–31 (RGIGSGLGKTS) are compositionally biased toward gly residues.

The protein belongs to the universal ribosomal protein uL15 family. As to quaternary structure, part of the 50S ribosomal subunit.

Functionally, binds to the 23S rRNA. The protein is Large ribosomal subunit protein uL15 of Francisella tularensis subsp. holarctica (strain FTNF002-00 / FTA).